The sequence spans 520 residues: Laccase (520 aa).

Positions 1 to 21 (MHTFLRSTALVVAGLSARALA) are cleaved as a signal peptide. Plastocyanin-like domains follow at residues 22 to 148 (SIGP…FVVY) and 160 to 304 (VDDD…ILRY). Asn-75 carries an N-linked (GlcNAc...) asparagine glycan. Cu cation is bound by residues His-85, His-87, His-130, and His-132. 2 disulfides stabilise this stretch: Cys-106-Cys-509 and Cys-138-Cys-227. N-linked (GlcNAc...) asparagine glycosylation is found at Asn-352 and Asn-402. Residues 373–496 (TVPVLLQILS…VFAEDIPDVA (124 aa)) enclose the Plastocyanin-like 3 domain. 7 residues coordinate Cu cation: His-418, His-421, His-423, His-473, Cys-474, His-475, and His-479.

This sequence belongs to the multicopper oxidase family. Cu cation serves as cofactor.

It localises to the secreted. The enzyme catalyses 4 hydroquinone + O2 = 4 benzosemiquinone + 2 H2O. In terms of biological role, lignin degradation and detoxification of lignin-derived products. In Phlebia radiata (White-rot fungus), this protein is Laccase (LAC).